A 111-amino-acid chain; its full sequence is Probable 4-amino-4-deoxy-L-arabinose-phosphoundecaprenol flippase subunit ArnE (111 aa).

The next 3 helical transmembrane spans lie at 38–58 (LWLGLALICMGAAMVLWLLVL), 61–81 (LPVGIAYPMLSLNFVWVTLAA), and 91–111 (PRHWLGVALIISGIIILGSAA). In terms of domain architecture, EamA spans 40 to 109 (LGLALICMGA…IISGIIILGS (70 aa)).

The protein belongs to the ArnE family. As to quaternary structure, heterodimer of ArnE and ArnF.

The protein localises to the cell inner membrane. It participates in bacterial outer membrane biogenesis; lipopolysaccharide biosynthesis. Translocates 4-amino-4-deoxy-L-arabinose-phosphoundecaprenol (alpha-L-Ara4N-phosphoundecaprenol) from the cytoplasmic to the periplasmic side of the inner membrane. The chain is Probable 4-amino-4-deoxy-L-arabinose-phosphoundecaprenol flippase subunit ArnE from Salmonella newport (strain SL254).